The primary structure comprises 494 residues: Probable cytochrome P450 518A1 (494 aa).

The helical transmembrane segment at 1-21 (MSILIILIISIIFYLIFDFLY) threads the bilayer. Residue cysteine 438 coordinates heme.

It belongs to the cytochrome P450 family. Heme is required as a cofactor.

The protein resides in the membrane. This Dictyostelium discoideum (Social amoeba) protein is Probable cytochrome P450 518A1 (cyp518A1).